The primary structure comprises 473 residues: Psoralen synthase (473 aa).

The helical transmembrane segment at tyrosine 1–valine 17 threads the bilayer. The segment at threonine 350–valine 355 is substrate specificity. Cysteine 425 provides a ligand contact to heme.

The protein belongs to the cytochrome P450 family. Heme serves as cofactor.

The protein resides in the microsome membrane. The enzyme catalyses (7S)-marmesin + reduced [NADPH--hemoprotein reductase] + O2 = psoralen + acetone + oxidized [NADPH--hemoprotein reductase] + 2 H2O + H(+). It functions in the pathway secondary metabolite biosynthesis. In terms of biological role, involved in the biosynthesis of coumarins and furanocoumarins (FCs), natural products required for defense responses against attacks by predators with potential medical and agroindustrial usages such as anticoagulant, rodenticide and artificial vanilla substitutes. Involved in linear furanocumarin (psoralen) biosynthesis. Converts marmesin to psoralen and, with much lower affinity, 5-hydroxymarmesin to bergaptol. The sequence is that of Psoralen synthase from Pastinaca sativa (Wild parsnip).